The following is an 84-amino-acid chain: Sec-independent protein translocase protein TatA (84 aa).

A helical membrane pass occupies residues 1–21 (MGGFSIWHWLIVLLIVVMVFG). The disordered stretch occupies residues 40–84 (KDGMKDGGQSPADEKPVVPASQVTNAQAADKAERNTIDVEARQKS). Over residues 69 to 84 (DKAERNTIDVEARQKS) the composition is skewed to basic and acidic residues.

It belongs to the TatA/E family. As to quaternary structure, the Tat system comprises two distinct complexes: a TatABC complex, containing multiple copies of TatA, TatB and TatC subunits, and a separate TatA complex, containing only TatA subunits. Substrates initially bind to the TatABC complex, which probably triggers association of the separate TatA complex to form the active translocon.

The protein resides in the cell inner membrane. Its function is as follows. Part of the twin-arginine translocation (Tat) system that transports large folded proteins containing a characteristic twin-arginine motif in their signal peptide across membranes. TatA could form the protein-conducting channel of the Tat system. This chain is Sec-independent protein translocase protein TatA, found in Polaromonas naphthalenivorans (strain CJ2).